Here is a 201-residue protein sequence, read N- to C-terminus: 3-isopropylmalate dehydratase small subunit (201 aa).

The protein belongs to the LeuD family. LeuD type 1 subfamily. As to quaternary structure, heterodimer of LeuC and LeuD.

The catalysed reaction is (2R,3S)-3-isopropylmalate = (2S)-2-isopropylmalate. Its pathway is amino-acid biosynthesis; L-leucine biosynthesis; L-leucine from 3-methyl-2-oxobutanoate: step 2/4. In terms of biological role, catalyzes the isomerization between 2-isopropylmalate and 3-isopropylmalate, via the formation of 2-isopropylmaleate. The sequence is that of 3-isopropylmalate dehydratase small subunit from Afipia carboxidovorans (strain ATCC 49405 / DSM 1227 / KCTC 32145 / OM5) (Oligotropha carboxidovorans).